A 168-amino-acid polypeptide reads, in one-letter code: Transcription antitermination protein NusB (168 aa).

The disordered stretch occupies residues 147–168 (RGLINNSSRNTSRSEEKHSTEK). Positions 158 to 168 (SRSEEKHSTEK) are enriched in basic and acidic residues.

The protein belongs to the NusB family.

Involved in transcription antitermination. Required for transcription of ribosomal RNA (rRNA) genes. Binds specifically to the boxA antiterminator sequence of the ribosomal RNA (rrn) operons. The protein is Transcription antitermination protein NusB of Chlorobium phaeobacteroides (strain BS1).